Reading from the N-terminus, the 510-residue chain is D-alanine--D-alanyl carrier protein ligase (510 aa).

Residue 157–158 (TS) coordinates ATP. D-alanine is bound at residue aspartate 202. Residue 297–302 (NTYGPT) coordinates ATP. Position 306 (valine 306) interacts with D-alanine. The ATP site is built by aspartate 389 and lysine 498. Residue lysine 498 coordinates D-alanine.

This sequence belongs to the ATP-dependent AMP-binding enzyme family. DltA subfamily.

It localises to the cytoplasm. It catalyses the reaction holo-[D-alanyl-carrier protein] + D-alanine + ATP = D-alanyl-[D-alanyl-carrier protein] + AMP + diphosphate. It functions in the pathway cell wall biogenesis; lipoteichoic acid biosynthesis. Catalyzes the first step in the D-alanylation of lipoteichoic acid (LTA), the activation of D-alanine and its transfer onto the D-alanyl carrier protein (Dcp) DltC. In an ATP-dependent two-step reaction, forms a high energy D-alanyl-AMP intermediate, followed by transfer of the D-alanyl residue as a thiol ester to the phosphopantheinyl prosthetic group of the Dcp. D-alanylation of LTA plays an important role in modulating the properties of the cell wall in Gram-positive bacteria, influencing the net charge of the cell wall. In Listeria monocytogenes serovar 1/2a (strain ATCC BAA-679 / EGD-e), this protein is D-alanine--D-alanyl carrier protein ligase.